A 585-amino-acid polypeptide reads, in one-letter code: T-cell surface protein tactile (585 aa).

Residues 1-21 (MEKKWKYCAVYYIIQIHFVKG) form the signal peptide. Residues 22-519 (VWEKTVNTEE…IVVNKPKDGM (498 aa)) are Extracellular-facing. Positions 38–125 (GSDVNLTCQT…YECMLVLYPE (88 aa)) constitute an Ig-like V-type 1 domain. N-linked (GlcNAc...) asparagine glycosylation is found at Asn42, Asn97, Asn107, Asn148, Asn156, Asn166, Asn200, Asn215, Asn277, Asn278, Asn300, Asn350, and Asn368. Cys45 and Cys118 are oxidised to a cystine. The 83-residue stretch at 156–238 (NQTLEIPCFQ…YRLHLSPVQI (83 aa)) folds into the Ig-like V-type 2 domain. A disulfide bridge links Cys163 with Cys247. Residues 269–375 (PEIPVIVENN…VWNISSEKIT (107 aa)) form the Ig-like C2-type domain. Cys290 and Cys355 are disulfide-bonded. Composition is skewed to polar residues over residues 385–418 (TDPPLSVTESTLDTQPSPASSVSPARYPATSSVT), 426–452 (RPNTTPQPSNSSMTTRGFNYPWTSSGT), and 460–475 (RIPSETYSSSPSGAGS). Residues 385 to 475 (TDPPLSVTES…YSSSPSGAGS (91 aa)) are disordered. The N-linked (GlcNAc...) asparagine glycan is linked to Asn435. Asn497 carries an N-linked (GlcNAc...) asparagine glycan. A helical membrane pass occupies residues 520-540 (SWPVIVAALLFCCMILFGLGV). The Cytoplasmic segment spans residues 541 to 585 (RKWCQYQKEIMERPPPFKPPPPPIKYTCIQEPNESDLPYHEMETL).

In terms of assembly, homodimer; disulfide-linked. Interacts with PVR. As to expression, expressed on normal T-cell lines and clones, and some transformed T-cells, but no other cultured cell lines tested. It is expressed at very low levels on activated B-cells.

It is found in the membrane. Its function is as follows. May be involved in adhesive interactions of activated T and NK cells during the late phase of the immune response. Promotes NK cell-target adhesion by interacting with PVR present on target cells. May function at a time after T and NK cells have penetrated the endothelium using integrins and selectins, when they are actively engaging diseased cells and moving within areas of inflammation. The chain is T-cell surface protein tactile (CD96) from Homo sapiens (Human).